Here is a 519-residue protein sequence, read N- to C-terminus: NAD-dependent histone deacetylase SIR2 (519 aa).

Positions 154–212 (EIDENDNKNDGTNNSDIDSDIDSNSDMDSQSESGELDDAMDVDDSLSENEDEYDQDMST) are disordered. Residues 187 to 208 (GELDDAMDVDDSLSENEDEYDQ) show a composition bias toward acidic residues. A Deacetylase sirtuin-type domain is found at 221-486 (MTPFKYKLPD…SYLCKCLKWD (266 aa)). NAD(+)-binding positions include 246 to 265 (GAGI…KGLY) and 328 to 331 (QNID). H348 serves as the catalytic Proton acceptor. Residues C356, C359, C380, and C383 each coordinate Zn(2+). Residues 430 to 432 (GTS), 455 to 457 (NKD), and C472 contribute to the NAD(+) site.

The protein belongs to the sirtuin family. Class I subfamily. Interacts with HXK1. It depends on Zn(2+) as a cofactor.

The protein resides in the nucleus. It carries out the reaction N(6)-acetyl-L-lysyl-[protein] + NAD(+) + H2O = 2''-O-acetyl-ADP-D-ribose + nicotinamide + L-lysyl-[protein]. NAD-dependent deacetylase. Heterochromatin component that silences transcription at silent mating loci, telomeres and the ribosomal DNA, and that also suppresses recombination in the rDNA and extends replicative life span. It acts as a NAD-dependent histone deacetylase, which deacetylates 'Lys-9' and 'Lys-14' of Histone H3 and 'Lys-16' of Histone H4. Functions in the distribution of oxidatively damaged proteins during cell division. Mediates phenotypic switching. This is NAD-dependent histone deacetylase SIR2 from Candida albicans (strain SC5314 / ATCC MYA-2876) (Yeast).